The sequence spans 462 residues: A-type ATP synthase subunit B (462 aa).

It belongs to the ATPase alpha/beta chains family. As to quaternary structure, has multiple subunits with at least A(3), B(3), C, D, E, F, H, I and proteolipid K(x).

The protein resides in the cell membrane. Functionally, component of the A-type ATP synthase that produces ATP from ADP in the presence of a proton gradient across the membrane. The B chain is a regulatory subunit. The protein is A-type ATP synthase subunit B of Methanococcus maripaludis (strain C7 / ATCC BAA-1331).